The primary structure comprises 336 residues: UbiA prenyltransferase domain-containing protein 1 (336 aa).

A2 is modified (N-acetylalanine). A run of 8 helical transmembrane segments spans residues 81-101, 132-152, 158-178, 186-206, 207-227, 243-265, 275-295, and 313-333; these read LLLG…LVNT, FGVF…YLSA, LALI…GIGF, LVIL…VQVG, SLAI…EAIL, IVTL…LLFV, THCS…FSLE, and LNLL…AGSL.

Belongs to the UbiA prenyltransferase family. Interacts with HMGCR and SOAT1.

The protein localises to the endoplasmic reticulum membrane. Its subcellular location is the golgi apparatus membrane. It is found in the mitochondrion membrane. It catalyses the reaction menadiol + (2E,6E,10E)-geranylgeranyl diphosphate = menaquinol-4 + diphosphate. It carries out the reaction all-trans-decaprenyl diphosphate + 4-hydroxybenzoate = 4-hydroxy-3-(all-trans-decaprenyl)benzoate + diphosphate. It functions in the pathway quinol/quinone metabolism; menaquinone biosynthesis. It participates in cofactor biosynthesis; ubiquinone biosynthesis. Functionally, prenyltransferase that mediates the formation of menaquinone-4 (MK-4) and coenzyme Q10. MK-4 is a vitamin K2 isoform required for endothelial cell development. Mediates the conversion of phylloquinone (PK) into MK-4, probably by cleaving the side chain of phylloquinone (PK) to release 2-methyl-1,4-naphthoquinone (menadione; K3) and then prenylating it with geranylgeranyl pyrophosphate (GGPP) to form MK-4. Also plays a role in cardiovascular development independently of MK-4 biosynthesis, by acting as a coenzyme Q10 biosynthetic enzyme: coenzyme Q10, also named ubiquinone, plays an important antioxidant role in the cardiovascular system. Mediates biosynthesis of coenzyme Q10 in the Golgi membrane, leading to protect cardiovascular tissues from NOS3/eNOS-dependent oxidative stress. This is UbiA prenyltransferase domain-containing protein 1 (Ubiad1) from Mus musculus (Mouse).